The sequence spans 281 residues: Homeobox protein Hox-A5 (281 aa).

2 disordered regions span residues 65-144 (VGNE…PCSS) and 162-183 (PLEEEKPAGSAPTTPQNVSDST). Composition is skewed to polar residues over residues 68–99 (ERTQGYSPSHSAATTPSVEPVRYTQSANSTGT) and 114–127 (VASSSPVTETQSQH). Positions 132 to 144 (NSITTPCSTPCSS) are enriched in low complexity. Residues 172–183 (APTTPQNVSDST) show a composition bias toward polar residues. Residues 187–192 (IYPWMR) carry the Antp-type hexapeptide motif. A DNA-binding region (homeobox) is located at residues 205–264 (GKRARTAYTRYQTLELEKEFHFNRYLTRRRRIEIAHALCLSERQIKIWFQNRRMKWKKDN).

The protein belongs to the Antp homeobox family.

The protein localises to the nucleus. Functionally, sequence-specific transcription factor which is part of a developmental regulatory system that provides cells with specific positional identities on the anterior-posterior axis. This chain is Homeobox protein Hox-A5 (hoxa5), found in Morone saxatilis (Striped bass).